Reading from the N-terminus, the 504-residue chain is Bifunctional purine biosynthesis protein PurH (504 aa).

Residues 1–144 form the MGS-like domain; the sequence is MRKRALISVY…KSFKNVVVIS (144 aa).

The protein belongs to the PurH family.

It carries out the reaction (6R)-10-formyltetrahydrofolate + 5-amino-1-(5-phospho-beta-D-ribosyl)imidazole-4-carboxamide = 5-formamido-1-(5-phospho-D-ribosyl)imidazole-4-carboxamide + (6S)-5,6,7,8-tetrahydrofolate. It catalyses the reaction IMP + H2O = 5-formamido-1-(5-phospho-D-ribosyl)imidazole-4-carboxamide. It functions in the pathway purine metabolism; IMP biosynthesis via de novo pathway; 5-formamido-1-(5-phospho-D-ribosyl)imidazole-4-carboxamide from 5-amino-1-(5-phospho-D-ribosyl)imidazole-4-carboxamide (10-formyl THF route): step 1/1. The protein operates within purine metabolism; IMP biosynthesis via de novo pathway; IMP from 5-formamido-1-(5-phospho-D-ribosyl)imidazole-4-carboxamide: step 1/1. The polypeptide is Bifunctional purine biosynthesis protein PurH (Fusobacterium nucleatum subsp. nucleatum (strain ATCC 25586 / DSM 15643 / BCRC 10681 / CIP 101130 / JCM 8532 / KCTC 2640 / LMG 13131 / VPI 4355)).